Reading from the N-terminus, the 396-residue chain is MWNASDVNFSCYHESVLGYRYVAVSWGIVVAVTGTVGNVLTLLALAIQPKLRTRFNLLIANLTVADLLYCTLLQPFSVDTYLHLHWRTGATFCQIFGFLLFVSNSVSILTLCLIALGRYLLIAHPKLFPQVFSAKGIVLALVSTWVVAVASFAPLWPIYILVPVVCTCSFDRIRGQPYTTILMGIYFVVGLSSVGVFYCLIHQQVKRAAQAMNQYKLRQASIRSNHVAGAHEAVPGRFQELDSGLASGGPSEGISSEPVSAATTQTLEGDSSEVRDQSNSKAAKQMAEKNPPGVAAKARTTKGAQRAQDSPSEFGKVTRMCFAVFLCFTLSYIPFLLLNILDAKVQAPRVVHMLAANLTWLNGCINPVLYAAMNRQFRQAYGSLLRRGPQSFHRFH.

The Extracellular portion of the chain corresponds to 1 to 26 (MWNASDVNFSCYHESVLGYRYVAVSW). 2 N-linked (GlcNAc...) asparagine glycosylation sites follow: Asn3 and Asn8. A helical transmembrane segment spans residues 27-47 (GIVVAVTGTVGNVLTLLALAI). Over 48–57 (QPKLRTRFNL) the chain is Cytoplasmic. A helical membrane pass occupies residues 58-78 (LIANLTVADLLYCTLLQPFSV). The Extracellular segment spans residues 79–94 (DTYLHLHWRTGATFCQ). The helical transmembrane segment at 95-115 (IFGFLLFVSNSVSILTLCLIA) threads the bilayer. Residues 116-144 (LGRYLLIAHPKLFPQVFSAKGIVLALVST) are Cytoplasmic-facing. Residues 145 to 165 (WVVAVASFAPLWPIYILVPVV) traverse the membrane as a helical segment. At 166–180 (CTCSFDRIRGQPYTT) the chain is on the extracellular side. Residues 181–201 (ILMGIYFVVGLSSVGVFYCLI) traverse the membrane as a helical segment. Topologically, residues 202–320 (HQQVKRAAQA…PSEFGKVTRM (119 aa)) are cytoplasmic. Residues Ser221 and Ser224 each carry the phosphoserine modification. The tract at residues 243-310 (SGLASGGPSE…TKGAQRAQDS (68 aa)) is disordered. Thr263 and Thr264 each carry phosphothreonine. A helical membrane pass occupies residues 321–341 (CFAVFLCFTLSYIPFLLLNIL). Topologically, residues 342 to 352 (DAKVQAPRVVH) are extracellular. A helical membrane pass occupies residues 353–373 (MLAANLTWLNGCINPVLYAAM). The Cytoplasmic portion of the chain corresponds to 374–396 (NRQFRQAYGSLLRRGPQSFHRFH).

The protein belongs to the G-protein coupled receptor 1 family. Interacts with ARRB2 and ARR3. Phosphorylated by a subset of GPR84-activating ligands. Constitutively phosphorylated at Ser-221 and Ser-224 in the absence of 2-HTP. By contrast, Thr-263 and Thr-264 are phosphorylated only following prior cell treatment with 2-HTP.

The protein localises to the cell membrane. Its function is as follows. G protein-coupled receptor that responds endogenously to dietary fatty acids or nutrient, specifically medium-chain free fatty acid (FFA) with carbon chain lengths of C9 to C14. Capric acid (C10:0), undecanoic acid (C11:0) and lauric acid (C12:0) are the most potent agonists. In immune cells, functions as a pro-inflammatory receptor via 6-OAU and promotes the expression of pro-inflammatory mediators such as TNFalpha, IL-6 and IL-12B as well as stimulating chemotactic responses through activation of signaling mediators AKT, ERK and NF-kappa-B. In addition, triggers increased bacterial adhesion and phagocytosis in macrophages and regulates pro-inflammatory function via enhancing NLRP3 inflammasome activation. Also plays an important role in inflammation by modulating neutrophil functions. Mechanistically, promotes neutrophil chemotaxis, reactive oxygen species (ROS) production and degranulation via LYN-AKT/ERK pathway. To regulate ROS, communicates with the two formyl peptide receptors FPR2 and FPR1 to control the NADPH oxidase activity in neutrophils. The polypeptide is G-protein coupled receptor 84 (GPR84) (Bos taurus (Bovine)).